We begin with the raw amino-acid sequence, 432 residues long: Glutamyl-tRNA reductase (432 aa).

Residues 55-58 (TCNR), Ser-114, 119-121 (ETQ), and Gln-125 contribute to the substrate site. Catalysis depends on Cys-56, which acts as the Nucleophile. 194 to 199 (GAGEMI) lines the NADP(+) pocket.

Belongs to the glutamyl-tRNA reductase family. Homodimer.

The enzyme catalyses (S)-4-amino-5-oxopentanoate + tRNA(Glu) + NADP(+) = L-glutamyl-tRNA(Glu) + NADPH + H(+). The protein operates within porphyrin-containing compound metabolism; protoporphyrin-IX biosynthesis; 5-aminolevulinate from L-glutamyl-tRNA(Glu): step 1/2. Its function is as follows. Catalyzes the NADPH-dependent reduction of glutamyl-tRNA(Glu) to glutamate 1-semialdehyde (GSA). In Burkholderia pseudomallei (strain 1710b), this protein is Glutamyl-tRNA reductase.